The sequence spans 131 residues: Profilin-2 (131 aa).

The protein belongs to the profilin family. Occurs in many kinds of cells as a complex with monomeric actin in a 1:1 ratio.

The protein resides in the cytoplasm. The protein localises to the cytoskeleton. Binds to actin and affects the structure of the cytoskeleton. At high concentrations, profilin prevents the polymerization of actin, whereas it enhances it at low concentrations. By binding to PIP2, it inhibits the formation of IP3 and DG. This is Profilin-2 from Ambrosia artemisiifolia (Common ragweed).